A 353-amino-acid polypeptide reads, in one-letter code: Photosystem II D2 protein (353 aa).

Thr-2 carries the post-translational modification N-acetylthreonine. Thr-2 bears the Phosphothreonine mark. The helical transmembrane segment at 41–61 (CAYFALGGWFTGTTFVTSWYT) threads the bilayer. His-118 is a binding site for chlorophyll a. Residues 125–141 (GFMLRQFELSRSVQLRP) traverse the membrane as a helical segment. Gln-130 and Asn-143 together coordinate pheophytin a. A helical membrane pass occupies residues 153-166 (VFVSVFLIYPLGQS). His-198 is a binding site for chlorophyll a. The helical transmembrane segment at 208–228 (AALLCAIHGATVENTLFEDGD) threads the bilayer. A plastoquinone is bound by residues His-215 and Phe-262. His-215 is a Fe cation binding site. His-269 contacts Fe cation. A helical membrane pass occupies residues 279-295 (GLWMSALGVVGLALNLR).

The protein belongs to the reaction center PufL/M/PsbA/D family. PSII is composed of 1 copy each of membrane proteins PsbA, PsbB, PsbC, PsbD, PsbE, PsbF, PsbH, PsbI, PsbJ, PsbK, PsbL, PsbM, PsbT, PsbX, PsbY, PsbZ, Psb30/Ycf12, at least 3 peripheral proteins of the oxygen-evolving complex and a large number of cofactors. It forms dimeric complexes. The D1/D2 heterodimer binds P680, chlorophylls that are the primary electron donor of PSII, and subsequent electron acceptors. It shares a non-heme iron and each subunit binds pheophytin, quinone, additional chlorophylls, carotenoids and lipids. There is also a Cl(-1) ion associated with D1 and D2, which is required for oxygen evolution. The PSII complex binds additional chlorophylls, carotenoids and specific lipids. serves as cofactor.

It localises to the plastid. The protein localises to the chloroplast thylakoid membrane. It carries out the reaction 2 a plastoquinone + 4 hnu + 2 H2O = 2 a plastoquinol + O2. In terms of biological role, photosystem II (PSII) is a light-driven water:plastoquinone oxidoreductase that uses light energy to abstract electrons from H(2)O, generating O(2) and a proton gradient subsequently used for ATP formation. It consists of a core antenna complex that captures photons, and an electron transfer chain that converts photonic excitation into a charge separation. The D1/D2 (PsbA/PsbD) reaction center heterodimer binds P680, the primary electron donor of PSII as well as several subsequent electron acceptors. D2 is needed for assembly of a stable PSII complex. The polypeptide is Photosystem II D2 protein (Arabis hirsuta (Hairy rock-cress)).